A 115-amino-acid chain; its full sequence is Large ribosomal subunit protein uL22c (115 aa).

Belongs to the universal ribosomal protein uL22 family. Part of the 50S ribosomal subunit.

Its subcellular location is the plastid. It is found in the chloroplast. Functionally, this protein binds specifically to 23S rRNA. Its function is as follows. The globular domain of the protein is located near the polypeptide exit tunnel on the outside of the subunit, while an extended beta-hairpin is found that lines the wall of the exit tunnel in the center of the 70S ribosome. This is Large ribosomal subunit protein uL22c (rpl22) from Thalassiosira pseudonana (Marine diatom).